We begin with the raw amino-acid sequence, 154 residues long: Aspartate carbamoyltransferase regulatory chain (154 aa).

Positions 111, 116, 139, and 142 each coordinate Zn(2+).

It belongs to the PyrI family. In terms of assembly, contains catalytic and regulatory chains. Zn(2+) serves as cofactor.

Its function is as follows. Involved in allosteric regulation of aspartate carbamoyltransferase. In Parabacteroides distasonis (strain ATCC 8503 / DSM 20701 / CIP 104284 / JCM 5825 / NCTC 11152), this protein is Aspartate carbamoyltransferase regulatory chain.